Here is a 554-residue protein sequence, read N- to C-terminus: Wee1-like protein kinase 2-C (554 aa).

Disordered stretches follow at residues 1–86 (MRTA…GGEC) and 145–183 (TLVN…SQMK). 2 stretches are compositionally biased toward polar residues: residues 38–48 (SPVSSWRTNNC) and 147–163 (VNVN…THFQ). One can recognise a Protein kinase domain in the interval 213–487 (FLEIEKIGAG…AKNSVLRRCV (275 aa)). ATP contacts are provided by residues 219–227 (IGAGEFGSV) and Lys-242. Asp-340 acts as the Proton acceptor in catalysis. Residues Asn-345 and Asp-377 each contribute to the Mg(2+) site. Residues 490-516 (AAELQKQLNVEKFKTAMLERELQAAKL) adopt a coiled-coil conformation.

The protein belongs to the protein kinase superfamily. Ser/Thr protein kinase family. WEE1 subfamily.

It localises to the nucleus. It catalyses the reaction L-tyrosyl-[protein] + ATP = O-phospho-L-tyrosyl-[protein] + ADP + H(+). In terms of biological role, protein tyrosine kinase that phosphorylates and inhibits cdk1 and acts as a regulator of meiosis in oocytes. Required to ensure the meiotic cell cycle in oocytes by phosphorylating cdk1 at 'Tyr-15', leading to inhibit cdk1 activity and prevent meiosis. The chain is Wee1-like protein kinase 2-C (wee2-c) from Xenopus laevis (African clawed frog).